The primary structure comprises 734 residues: Regulator of G-protein signaling rgs-6 (734 aa).

Residues 1–24 form a disordered region; it reads MSTPCSGNEPATPTNTSPNNETSN. Residues 8-24 are compositionally biased toward low complexity; it reads NEPATPTNTSPNNETSN. Residues 46-157 form the RGS domain; sequence IFKKVIRDPV…YDCWPRFLRS (112 aa). 3 disordered regions span residues 162–236, 489–515, and 538–734; these read QPSF…SPTH, HAVSKSDPNPSAGTSQDRMASGVYSPA, and VNAG…AAYV. Residues 166 to 176 show a composition bias toward acidic residues; that stretch reads TDEELAADDED. The span at 180–191 shows a compositional bias: polar residues; that stretch reads HSQPTSLNNTNE. Residues 194-208 are compositionally biased toward low complexity; that stretch reads AAAQQSQPAPNAPAA. 2 stretches are compositionally biased toward polar residues: residues 494–506 and 538–557; these read SDPNPSAGTSQDR and VNAGSASTSSNNVSEPSKNR. Composition is skewed to basic and acidic residues over residues 563 to 585 and 606 to 619; these read SKTEKKVVKPESEKEKLKPRSDD and TTEEPLKRMGKSGD. Low complexity predominate over residues 642-694; it reads AAAAAAGASPSTSAPSTSTSVQTKTTTSPTKSPTSTTITTSGTTTSATSSVAT. 2 stretches are compositionally biased toward polar residues: residues 705–715 and 724–734; these read SASTPATSSQL and RESSWQTAAYV.

This chain is Regulator of G-protein signaling rgs-6, found in Caenorhabditis elegans.